Consider the following 185-residue polypeptide: Photosystem I assembly protein Ycf4 (185 aa).

2 consecutive transmembrane segments (helical) span residues 24–44 (YIIGGMLTIGGIGFLLASISS) and 66–86 (IIMGAYGVIANLLNFYLWYLV).

This sequence belongs to the Ycf4 family.

It is found in the cellular thylakoid membrane. Its function is as follows. Seems to be required for the assembly of the photosystem I complex. This is Photosystem I assembly protein Ycf4 from Prochlorococcus marinus (strain MIT 9301).